Here is a 581-residue protein sequence, read N- to C-terminus: 2-hydroxyacyl-CoA lyase 1 (581 aa).

Residues Ser-4 and Ser-6 each carry the phosphoserine modification. Thiamine diphosphate is bound at residue Glu-63. N6-succinyllysine occurs at positions 354, 361, and 368. The interval Thr-404–Gly-487 is thiamine pyrophosphate binding. Residues Asp-458 and Asn-485 each coordinate Mg(2+). Residues Ser-579 to Met-581 carry the Microbody targeting signal motif.

It belongs to the TPP enzyme family. As to quaternary structure, homotetramer. Mg(2+) is required as a cofactor. It depends on thiamine diphosphate as a cofactor. As to expression, predominanly expressed in liver.

It is found in the peroxisome. The enzyme catalyses a 2-hydroxy-3-methyl fatty acyl-CoA = a 2-methyl-branched fatty aldehyde + formyl-CoA. It catalyses the reaction an (R)-2-hydroxy-long-chain-fatty acyl-CoA = a long-chain fatty aldehyde + formyl-CoA. The catalysed reaction is 2-hydroxy-3-methylhexadecanoyl-CoA = 2-methylpentadecanal + formyl-CoA. It carries out the reaction 2-hydroxyoctadecanoyl-CoA = heptadecanal + formyl-CoA. The enzyme catalyses 2-hydroxyphytanoyl-CoA = 2,6,10,14-tetramethylpentadecanal + formyl-CoA. The protein operates within lipid metabolism; fatty acid metabolism. Functionally, peroxisomal 2-OH acyl-CoA lyase involved in the cleavage (C1 removal) reaction in the fatty acid alpha-oxydation in a thiamine pyrophosphate (TPP)-dependent manner. Involved in the degradation of 3-methyl-branched fatty acids like phytanic acid and the shortening of 2-hydroxy long-chain fatty acids. Plays a significant role in the biosynthesis of heptadecanal in the liver. In Mus musculus (Mouse), this protein is 2-hydroxyacyl-CoA lyase 1 (Hacl1).